We begin with the raw amino-acid sequence, 657 residues long: Zinc finger protein 630 (657 aa).

The KRAB domain occupies 8–79; sequence VTFEDVAVDF…ESELSRWIYP (72 aa). 2 consecutive C2H2-type zinc fingers follow at residues 263-285 and 291-313; these read NVCSMCGKAFIKKSQLIIHQRIH and YVCGDCRKAFSEKSHLIVHQRIH. The C2H2-type 3; degenerate zinc finger occupies 319 to 341; it reads YECTKYGRAFSRKSPFTVHQRVH. 9 consecutive C2H2-type zinc fingers follow at residues 347-369, 375-397, 403-425, 431-453, 459-481, 487-509, 515-537, 543-565, and 571-593; these read YECFECPKAFSQKSHLIIHQRVH, FECSECRKAFCEMSHLFIHQITH, YECTECGKTFPRKTQLIIHQRTH, YKCGECGKTFCQQSHLIGHQRIH, YVCTDCGKAFSQKSHLTGHQRLH, YMCTECGKSFSQKSPLIIHQRIH, YQCGECGKTFSQKSLLIIHLRVH, YECTECGRAFSLKSHLILHQRGH, and YECSECGKAFCGKSPLIIHQKTH. The C2H2-type 13; degenerate zinc finger occupies 599–621; the sequence is PECAESGMTFFWKSQMITYQRRH. The segment at 627–649 adopts a C2H2-type 14; degenerate zinc-finger fold; it reads SRCSDCGKAFCQHVYFTGHQNPY.

This sequence belongs to the krueppel C2H2-type zinc-finger protein family.

It is found in the nucleus. Functionally, may be involved in transcriptional regulation. This chain is Zinc finger protein 630 (ZNF630), found in Homo sapiens (Human).